We begin with the raw amino-acid sequence, 627 residues long: tRNA uridine 5-carboxymethylaminomethyl modification enzyme MnmG (627 aa).

FAD-binding positions include 16-21 (GAGHAG), Val128, and Ser183. An NAD(+)-binding site is contributed by 275–289 (GPRYCPSIEDKVMRF). Position 372 (Gln372) interacts with FAD.

The protein belongs to the MnmG family. As to quaternary structure, homodimer. Heterotetramer of two MnmE and two MnmG subunits. FAD is required as a cofactor.

The protein localises to the cytoplasm. Its function is as follows. NAD-binding protein involved in the addition of a carboxymethylaminomethyl (cmnm) group at the wobble position (U34) of certain tRNAs, forming tRNA-cmnm(5)s(2)U34. In Geobacter sulfurreducens (strain ATCC 51573 / DSM 12127 / PCA), this protein is tRNA uridine 5-carboxymethylaminomethyl modification enzyme MnmG.